The sequence spans 670 residues: Soluble lamin-associated protein of 75 kDa (670 aa).

Disordered stretches follow at residues P273 to M301 and S314 to T670. Residue S350 is modified to Phosphoserine. Over residues S358–P375 the composition is skewed to polar residues. Residues S378–P387 are compositionally biased toward acidic residues. S379 bears the Phosphoserine mark. A compositionally biased stretch (basic and acidic residues) spans E414–E423. Positions T442–D453 are enriched in acidic residues. Position 449 is a phosphoserine (S449). Residues P460–L470 show a composition bias toward polar residues. Basic and acidic residues-rich tracts occupy residues K479–D494 and S504–L514. S515 is subject to Phosphoserine. 2 stretches are compositionally biased toward polar residues: residues E558 to E569 and P579 to L591. Phosphoserine is present on residues S615, S618, and S635. Residues N651–T670 show a composition bias toward basic residues.

The protein belongs to the FAM169 family.

Its subcellular location is the nucleus envelope. The protein localises to the nucleus inner membrane. The protein is Soluble lamin-associated protein of 75 kDa (FAM169A) of Homo sapiens (Human).